Here is a 328-residue protein sequence, read N- to C-terminus: 2-hydroxyisoflavanone dehydratase (328 aa).

Positions 85-87 (HGG) match the Involved in the stabilization of the negatively charged intermediate by the formation of the oxyanion hole motif. Residues Thr173, Asp272, and His304 contribute to the active site.

The protein belongs to the 'GDXG' lipolytic enzyme family.

The catalysed reaction is (2R,3S)-2,4',7-trihydroxyisoflavanone = daidzein + H2O + H(+). It catalyses the reaction 2-hydroxy-2,3-dihydrogenistein = genistein + H2O + H(+). It carries out the reaction a carboxylic ester + H2O = an alcohol + a carboxylate + H(+). It functions in the pathway secondary metabolite biosynthesis; flavonoid biosynthesis. Dehydratase that mediates the biosynthesis of isoflavonoids. Can better use 2,7-dihydroxy-4'-methoxyisoflavanone as substrate. Has also a slight carboxylesterase activity toward p-nitrophenyl butyrate. This chain is 2-hydroxyisoflavanone dehydratase (HIDM), found in Glycyrrhiza echinata (Licorice).